Reading from the N-terminus, the 412-residue chain is Glucose-1-phosphate adenylyltransferase (412 aa).

Alpha-D-glucose 1-phosphate is bound by residues G163, 179-180 (EK), and S197.

Belongs to the bacterial/plant glucose-1-phosphate adenylyltransferase family. As to quaternary structure, homotetramer.

It carries out the reaction alpha-D-glucose 1-phosphate + ATP + H(+) = ADP-alpha-D-glucose + diphosphate. It participates in glycan biosynthesis; glycogen biosynthesis. Involved in the biosynthesis of ADP-glucose, a building block required for the elongation reactions to produce glycogen. Catalyzes the reaction between ATP and alpha-D-glucose 1-phosphate (G1P) to produce pyrophosphate and ADP-Glc. The protein is Glucose-1-phosphate adenylyltransferase of Frankia casuarinae (strain DSM 45818 / CECT 9043 / HFP020203 / CcI3).